The primary structure comprises 306 residues: Glutaminase (306 aa).

Substrate is bound by residues S62, N114, E159, N166, Y190, Y242, and V260.

It belongs to the glutaminase family. As to quaternary structure, homotetramer.

The enzyme catalyses L-glutamine + H2O = L-glutamate + NH4(+). This chain is Glutaminase, found in Clostridium tetani (strain Massachusetts / E88).